The sequence spans 334 residues: Glycerol-1-phosphate dehydrogenase [NAD(P)+] (334 aa).

NAD(+) contacts are provided by residues 77–81 and 99–102; these read GKPID and TTAS. D104 contributes to the substrate binding site. NAD(+) is bound at residue S108. Position 147 (D147) interacts with substrate. The Zn(2+) site is built by D147 and H225. H229 serves as a coordination point for substrate. H246 contributes to the Zn(2+) binding site.

It belongs to the glycerol-1-phosphate dehydrogenase family. Requires Zn(2+) as cofactor.

The protein resides in the cytoplasm. The catalysed reaction is sn-glycerol 1-phosphate + NAD(+) = dihydroxyacetone phosphate + NADH + H(+). It carries out the reaction sn-glycerol 1-phosphate + NADP(+) = dihydroxyacetone phosphate + NADPH + H(+). It functions in the pathway membrane lipid metabolism; glycerophospholipid metabolism. Catalyzes the NAD(P)H-dependent reduction of dihydroxyacetonephosphate (DHAP or glycerone phosphate) to glycerol 1-phosphate (G1P). The G1P thus generated is used as the glycerophosphate backbone of phospholipids in the cellular membranes of Archaea. This chain is Glycerol-1-phosphate dehydrogenase [NAD(P)+], found in Methanococcus vannielii (strain ATCC 35089 / DSM 1224 / JCM 13029 / OCM 148 / SB).